We begin with the raw amino-acid sequence, 242 residues long: Ribosomal RNA small subunit methyltransferase G (242 aa).

Residues glycine 78, leucine 83, 130 to 131 (AE), and arginine 151 contribute to the S-adenosyl-L-methionine site.

The protein belongs to the methyltransferase superfamily. RNA methyltransferase RsmG family.

It localises to the cytoplasm. Functionally, specifically methylates the N7 position of guanine in position 518 of 16S rRNA. The polypeptide is Ribosomal RNA small subunit methyltransferase G (Salinispora arenicola (strain CNS-205)).